Consider the following 155-residue polypeptide: NADPH-dependent 7-cyano-7-deazaguanine reductase (155 aa).

Cys-52 serves as the catalytic Thioimide intermediate. Residue Asp-59 is the Proton donor of the active site. Residues 74–76 and 93–94 contribute to the substrate site; these read VES and HE.

It belongs to the GTP cyclohydrolase I family. QueF type 1 subfamily.

The protein localises to the cytoplasm. The catalysed reaction is 7-aminomethyl-7-carbaguanine + 2 NADP(+) = 7-cyano-7-deazaguanine + 2 NADPH + 3 H(+). It participates in tRNA modification; tRNA-queuosine biosynthesis. In terms of biological role, catalyzes the NADPH-dependent reduction of 7-cyano-7-deazaguanine (preQ0) to 7-aminomethyl-7-deazaguanine (preQ1). The protein is NADPH-dependent 7-cyano-7-deazaguanine reductase of Syntrophobacter fumaroxidans (strain DSM 10017 / MPOB).